A 367-amino-acid chain; its full sequence is Dual-specificity RNA methyltransferase RlmN (367 aa).

The Proton acceptor role is filled by Glu-93. A Radical SAM core domain is found at Glu-99–Asp-333. Residues Cys-106 and Cys-338 are joined by a disulfide bond. The [4Fe-4S] cluster site is built by Cys-113, Cys-117, and Cys-120. Residues Gly-162 to Glu-163, Ser-194, Ser-216 to His-218, and Asn-295 contribute to the S-adenosyl-L-methionine site. Cys-338 acts as the S-methylcysteine intermediate in catalysis.

The protein belongs to the radical SAM superfamily. RlmN family. It depends on [4Fe-4S] cluster as a cofactor.

The protein resides in the cytoplasm. It catalyses the reaction adenosine(2503) in 23S rRNA + 2 reduced [2Fe-2S]-[ferredoxin] + 2 S-adenosyl-L-methionine = 2-methyladenosine(2503) in 23S rRNA + 5'-deoxyadenosine + L-methionine + 2 oxidized [2Fe-2S]-[ferredoxin] + S-adenosyl-L-homocysteine. The enzyme catalyses adenosine(37) in tRNA + 2 reduced [2Fe-2S]-[ferredoxin] + 2 S-adenosyl-L-methionine = 2-methyladenosine(37) in tRNA + 5'-deoxyadenosine + L-methionine + 2 oxidized [2Fe-2S]-[ferredoxin] + S-adenosyl-L-homocysteine. Functionally, specifically methylates position 2 of adenine 2503 in 23S rRNA and position 2 of adenine 37 in tRNAs. m2A2503 modification seems to play a crucial role in the proofreading step occurring at the peptidyl transferase center and thus would serve to optimize ribosomal fidelity. This chain is Dual-specificity RNA methyltransferase RlmN, found in Aeromonas hydrophila subsp. hydrophila (strain ATCC 7966 / DSM 30187 / BCRC 13018 / CCUG 14551 / JCM 1027 / KCTC 2358 / NCIMB 9240 / NCTC 8049).